Reading from the N-terminus, the 85-residue chain is DNA-directed RNA polymerase subunit omega (85 aa).

This sequence belongs to the RNA polymerase subunit omega family. In terms of assembly, the RNAP catalytic core consists of 2 alpha, 1 beta, 1 beta' and 1 omega subunit. When a sigma factor is associated with the core the holoenzyme is formed, which can initiate transcription.

The enzyme catalyses RNA(n) + a ribonucleoside 5'-triphosphate = RNA(n+1) + diphosphate. Its function is as follows. Promotes RNA polymerase assembly. Latches the N- and C-terminal regions of the beta' subunit thereby facilitating its interaction with the beta and alpha subunits. The polypeptide is DNA-directed RNA polymerase subunit omega (Latilactobacillus sakei subsp. sakei (strain 23K) (Lactobacillus sakei subsp. sakei)).